The primary structure comprises 107 residues: L-rhamnose mutarotase (107 aa).

Tyrosine 21 lines the substrate pocket. Histidine 25 serves as the catalytic Proton donor. Substrate is bound by residues tyrosine 44 and 79–80 (WW).

The protein belongs to the rhamnose mutarotase family. In terms of assembly, homodimer.

It is found in the cytoplasm. It catalyses the reaction alpha-L-rhamnose = beta-L-rhamnose. It participates in carbohydrate metabolism; L-rhamnose metabolism. Functionally, involved in the anomeric conversion of L-rhamnose. The polypeptide is L-rhamnose mutarotase (Agrobacterium fabrum (strain C58 / ATCC 33970) (Agrobacterium tumefaciens (strain C58))).